We begin with the raw amino-acid sequence, 251 residues long: tRNA pseudouridine synthase A 1 (251 aa).

The active-site Nucleophile is Asp-52. Tyr-110 lines the substrate pocket.

It belongs to the tRNA pseudouridine synthase TruA family. In terms of assembly, homodimer.

The catalysed reaction is uridine(38/39/40) in tRNA = pseudouridine(38/39/40) in tRNA. Functionally, formation of pseudouridine at positions 38, 39 and 40 in the anticodon stem and loop of transfer RNAs. The chain is tRNA pseudouridine synthase A 1 from Desulfotalea psychrophila (strain LSv54 / DSM 12343).